A 99-amino-acid chain; its full sequence is Small ribosomal subunit protein bS20 (99 aa).

This sequence belongs to the bacterial ribosomal protein bS20 family.

In terms of biological role, binds directly to 16S ribosomal RNA. The protein is Small ribosomal subunit protein bS20 of Thermotoga neapolitana (strain ATCC 49049 / DSM 4359 / NBRC 107923 / NS-E).